The chain runs to 4471 residues: Dynein axonemal heavy chain 10 (4471 aa).

Residues 1–1793 (MVPEEVEVEI…NIRQCTGTFG (1793 aa)) are stem. Residues 46–65 (TESLGQPLNREDEEMDKEIS) are disordered. 4 coiled-coil regions span residues 203–223 (NVQK…GEIK), 602–622 (QEVK…EDRK), 1071–1106 (KLLN…EDLK), and 1217–1245 (VELL…KLFD). N-linked (GlcNAc...) asparagine glycosylation occurs at N1074. Residues 1221 to 1254 (GVYERELARHEKSRQELANAEKLFDLPITMYPEL) form a TPR 1 repeat. AAA regions lie at residues 1794-2015 (YGYE…VLVM), 2075-2294 (DAVE…VIVE), 2417-2665 (IHAP…VFNG), and 2765-3014 (EYNE…LRRS). A GPAGTGKT motif motif is present at residues 1832–1839 (GPAGTGKT). 1832–1839 (GPAGTGKT) lines the ATP pocket. The CFDEFNR motif motif lies at 1882-1888 (CFDEFNR). Residues 2113 to 2120 (GPTRGGKS) and 2455 to 2462 (GESGTSKT) each bind ATP. 2 TPR repeats span residues 2736 to 2769 (MALH…YNES) and 2771 to 2797 (TKMN…MDRG). Residues 2747 to 2770 (EDIQDYEAAKALFQEILEEYNESN) are a coiled coil. 2803-2810 (GVGGSGKQ) contributes to the ATP binding site. A stalk region spans residues 3029–3313 (YSKLLDEKTQ…QKLQEEAEIM (285 aa)). Coiled-coil stretches lie at residues 3045–3131 (KRLD…LAEV), 3257–3327 (KREK…ISGL), and 3567–3638 (ERRE…EKTA). The tract at residues 3399–3629 (LTDDVEISRW…TKSKATEVSE (231 aa)) is AAA 5. Residues 3802 to 3837 (WQEWYDLDSLEQFPVPLGYDNNITPFQKLLILRCFR) form a TPR 4 repeat. Positions 3845–4062 (VTDYVTVTMG…FQVCMEILNT (218 aa)) are AAA 6. Residues 4074 to 4108 (RIPWGSLKYLIGEVMYGGRAIDSFDRRILTIYMDE) form a TPR 5 repeat. Residues 4235-4260 (LLQELERFNKLVVRMTKSLAELQRAL) adopt a coiled-coil conformation.

This sequence belongs to the dynein heavy chain family. Consists of at least two heavy chains and a number of intermediate and light chains. As to expression, expressed primarily in trachea and testis, 2 tissues containing axonemal structures. Also expressed in brain but not in adult heart.

It localises to the cytoplasm. The protein resides in the cytoskeleton. It is found in the cilium axoneme. Functionally, force generating protein of respiratory cilia. Produces force towards the minus ends of microtubules. Dynein has ATPase activity; the force-producing power stroke is thought to occur on release of ADP. Involved in sperm motility; implicated in sperm flagellar assembly. Probable inner arm dynein heavy chain. This is Dynein axonemal heavy chain 10 (DNAH10) from Homo sapiens (Human).